The primary structure comprises 358 residues: GMP reductase (358 aa).

Residues 26 to 27 (SR), Lys-78, 130 to 132 (DVA), and 181 to 182 (IG) each bind NADP(+). Positions 182, 184, and 187 each coordinate K(+). Cys-187 acts as the Thioimidate intermediate in catalysis. Thr-189 (proton donor/acceptor) is an active-site residue. Arg-190 lines the K(+) pocket. GMP contacts are provided by residues 220-222 (DGG), 243-244 (GG), 269-271 (GMS), and 287-291 (RASEG). Residues Met-270, 286–287 (YR), and 315–318 (SACT) each bind NADP(+).

Belongs to the IMPDH/GMPR family. GuaC type 1 subfamily. As to quaternary structure, homotetramer.

It catalyses the reaction IMP + NH4(+) + NADP(+) = GMP + NADPH + 2 H(+). Catalyzes the irreversible NADPH-dependent deamination of GMP to IMP. It functions in the conversion of nucleobase, nucleoside and nucleotide derivatives of G to A nucleotides, and in maintaining the intracellular balance of A and G nucleotides. The protein is GMP reductase of Caenorhabditis elegans.